A 525-amino-acid chain; its full sequence is GMP synthase [glutamine-hydrolyzing] (525 aa).

In terms of domain architecture, Glutamine amidotransferase type-1 spans 9–207 (RILILDFGSQ…VRDICQCEAL (199 aa)). Catalysis depends on Cys86, which acts as the Nucleophile. Catalysis depends on residues His181 and Glu183. The 193-residue stretch at 208–400 (WTPAKIIDDA…LGLPYDMLYR (193 aa)) folds into the GMPS ATP-PPase domain. 235 to 241 (SGGVDSS) contacts ATP.

As to quaternary structure, homodimer.

The enzyme catalyses XMP + L-glutamine + ATP + H2O = GMP + L-glutamate + AMP + diphosphate + 2 H(+). It functions in the pathway purine metabolism; GMP biosynthesis; GMP from XMP (L-Gln route): step 1/1. In terms of biological role, catalyzes the synthesis of GMP from XMP. The protein is GMP synthase [glutamine-hydrolyzing] of Salmonella newport (strain SL254).